Consider the following 199-residue polypeptide: Small ribosomal subunit protein uS4 (199 aa).

The 64-residue stretch at 94–157 (SRLDNIVYRM…QNVPTILASI (64 aa)) folds into the S4 RNA-binding domain.

The protein belongs to the universal ribosomal protein uS4 family. As to quaternary structure, part of the 30S ribosomal subunit. Contacts protein S5. The interaction surface between S4 and S5 is involved in control of translational fidelity.

One of the primary rRNA binding proteins, it binds directly to 16S rRNA where it nucleates assembly of the body of the 30S subunit. In terms of biological role, with S5 and S12 plays an important role in translational accuracy. The polypeptide is Small ribosomal subunit protein uS4 (Mycoplasma mobile (strain ATCC 43663 / 163K / NCTC 11711) (Mesomycoplasma mobile)).